The sequence spans 502 residues: Probable cytochrome P450 313b1 (502 aa).

Residue C449 coordinates heme.

The protein belongs to the cytochrome P450 family. It depends on heme as a cofactor.

It localises to the endoplasmic reticulum membrane. It is found in the microsome membrane. May be involved in the metabolism of insect hormones and in the breakdown of synthetic insecticides. In Drosophila melanogaster (Fruit fly), this protein is Probable cytochrome P450 313b1 (Cyp313b1).